The following is a 229-amino-acid chain: Uracil-DNA glycosylase (229 aa).

Catalysis depends on aspartate 64, which acts as the Proton acceptor.

Belongs to the uracil-DNA glycosylase (UDG) superfamily. UNG family.

The protein localises to the cytoplasm. It catalyses the reaction Hydrolyzes single-stranded DNA or mismatched double-stranded DNA and polynucleotides, releasing free uracil.. Excises uracil residues from the DNA which can arise as a result of misincorporation of dUMP residues by DNA polymerase or due to deamination of cytosine. This is Uracil-DNA glycosylase from Geobacillus kaustophilus (strain HTA426).